Consider the following 248-residue polypeptide: Large ribosomal subunit protein uL30B (248 aa).

A disordered region spans residues 1–45; the sequence is MSQKKQKIQVEQKVPENVAKKTQRDSKLRDAVAKRRTERLAANKT. Residues 8 to 41 show a composition bias toward basic and acidic residues; sequence IQVEQKVPENVAKKTQRDSKLRDAVAKRRTERLA.

The protein belongs to the universal ribosomal protein uL30 family.

In terms of biological role, binds to G-rich structures in 28S rRNA and in mRNAs. Plays a regulatory role in the translation apparatus; inhibits cell-free translation of mRNAs. In Paramecium tetraurelia, this protein is Large ribosomal subunit protein uL30B (Rpl7-2).